The chain runs to 254 residues: Serine acetyltransferase (254 aa).

This sequence belongs to the transferase hexapeptide repeat family.

Its subcellular location is the cytoplasm. The enzyme catalyses L-serine + acetyl-CoA = O-acetyl-L-serine + CoA. It functions in the pathway amino-acid biosynthesis; L-cysteine biosynthesis; L-cysteine from L-serine: step 1/2. This Buchnera aphidicola subsp. Baizongia pistaciae (strain Bp) protein is Serine acetyltransferase (cysE).